The sequence spans 250 residues: MILTSISVLKDNYVWILYNDNCSCIIIDPGVSEDIIKKIEKKNWKLIAILLTHNHIDHVGGVEEIIRRYPNVTVFGPEETKTRNVNKIVKQGDVIKLLKSEIHVFLTPGHTLGHVSYYLKPYIFCGDTLFSGGCGRVFKNKFFDMYQSINFIKSLPKKTILCCSHEYTLSNLNFAMSILPFDKKIKKYYKKIKKHISQNKTSLPVSLETEKKINIFLRTNEKTIKKAMGLKKDTSSFEVFILLRKEKDDF.

7 residues coordinate Zn(2+): His53, His55, Asp57, His58, His110, Asp127, and His165.

Belongs to the metallo-beta-lactamase superfamily. Glyoxalase II family. As to quaternary structure, monomer. Zn(2+) is required as a cofactor.

The catalysed reaction is an S-(2-hydroxyacyl)glutathione + H2O = a 2-hydroxy carboxylate + glutathione + H(+). The protein operates within secondary metabolite metabolism; methylglyoxal degradation; (R)-lactate from methylglyoxal: step 2/2. Functionally, thiolesterase that catalyzes the hydrolysis of S-D-lactoyl-glutathione to form glutathione and D-lactic acid. The sequence is that of Hydroxyacylglutathione hydrolase from Buchnera aphidicola subsp. Schizaphis graminum (strain Sg).